Reading from the N-terminus, the 2359-residue chain is MTITTMTPQNGTRRQVDGGPICFFPTMTRLDMQSITFDNHVVQKLTSFPNASDAGVHLLLAGLWALTLRQYAEVDTARFEVSTSILASGKGSGATKHVFSIALSPSDPVSTLFDVRNWDIRFVDQKHSDSFNTGVFVVENQNGRCLLDVEYHDINLLLQSNRTSAELSLVYRSSAIAGTYARHLADGIAQAIISISENPNQSIGAVDFCCSLQKAQVVTWQNAKIIQPDRSFLFEYISRNATVHGDTLAIDSWDGQFTYAELDGLSTVMATRFQERGIGPGDLVPMCFGKTRWAIAAMLAINKTGAGFVPLDPAYPQSRLETIIQKTQARVALASPTTESILRPLGLPLLVISDSILGCCLPHSKRYTAPNSGVAPAYCFFTSGSTGDPKGCEVSHLAFASIATHARSLCLSQQSRSLQFASFCFGASLLEIWCTLIVGGTLCIPSDHDRLNSLGEFMAKMRINWAFITPTVLASISPDNFNNLHLFIAGEPIGERDIRTWAPRARLFQAYGLTEWAGVFAVSRQIRTPEDRKSIGSPVNARAWIVDPLDHQKLAPIGAVGELVIEGPSLAQGYRGDPQRTAAVFLQRPPWLTLPALSKDGSSSRVYKTGDLVRYAEDGSLVYVRRKDNQVKIHGQRLEIGEVEYHVRQLFPQAKMVIVMVHEPSDAASHQRNLVALTLHPPNNGHTGFSHGKLEFMEVDQEYQSKVEHVRNGLRSRLPAFMIPQLFLPLSQIPTTITGKADRRSLCRDVNKLSYAQLHGLTTQMVSTRAAQGKGEEAIHAAVCDVLGLAPEHLGMNDNFFHLGGNSASAMKLTMSARRRGLRFTIRDVFNHPVLAELASAANLSNGCERPVVQTMELLEPESVSELKQLAVSQCRIDEDIIEDIYPSTALQEGLVAITARDPSLCKARVICKLRSNVRIDALKAAWECVVQLNDILRTRFILSASHGTFQVVCKEPFSWARAQNLEDCIQQSDALVHRVGDDLVHAYIIPDEKDRDSASTFVFVAHHALCDQWSIRLLLDQLTAAYGHSKLPSNRFSAFIRYLTKTRSHFKNYWINQFQGLEAVAFPPLPSPSYTPVASEKFDFVMKLLGNTTKQITTATYIKLAWAVVISCNTGSNDTVFGVTVNGRGAPIDGVGELTGPTIATIPQRIKLLPDQSATSALAEIQSHSLEVIPYEQAGLQNIQKYSPEARSACMFQSQLIIQPCPPSPPDLFEACDFSATQTGGFSAYGLSLECQMTYDDRHCEVTATFDPGMISRERVQRLLQHLELVLQDVMADPSRKVGDLPRMSRQDWDQIQRWSGTLPPVSRQCVHDAVDERYLEYPNACAVSAPDGDLSYAELIHSANAVAAELLAHGVEPGKYIPVLFEKCKWSPVAMLGVLKAGAAFVLLDPSYPPQRLHAICGGLKSQIILCSKGLSARAASLGPTAIAVHENATFLVDIPNATLPVVSPEDPAYVVFTSGSTGTPKGAIIDHQSYCSSALAHNRAHFLGRNSRVLQYASYAFDVSIMETLSTLMAGGCVCILSDLERHDHFADSVQRLAVTHAFLTPSTARLLMQRELPSLCVLVMGGEVMSLADRSYWMKRVRLMNEYGIAECSVASTIREVSDVEQRDIGFPMGVLAWVVDQNDHEKLVAIGAIGELLLEGPSVGRGYLDNPEATRRAFIEQPGWLRAVRGGKTSRVYKTGDLVQYNEDGSLSFIGRKDSQIKIRGQRFELEEVEQHLRRIDEIKEVTAVAVAPSDRQKQAYLVAFIVPRTRESFCVHSAKALVTHPTEEFRHLAAAIQSKLHSILPAHMVPSIYLPVNQMPKTSSDKVDRCRLKEEVGKWSWSDLQAYSVSSTSRRAPSNSVEQDLQRVWAQILGIRLDSIGVEDSFFHLGGDSIIAMQVVAEARSRGLDHSVQDINQLKSIKAIANKIGVVSTIAQPVVQDQVTDELFGLTPIQEFFFEKYPEGTCRFNQNILVHFQKPVADIDVERAANKLVQNHAILRARYARQKDGSWKQFFTGYTEQCFRFSMHKVNSVQEMRHIIGQSQTSLDPEHGPVFTVDLFDHNGQQSLFMIGHHLVLDLVSWRIILADMEAMILDPQHQPHLTMSFQTWARLQAEYGTRHLEPPPVQQLCSIDEPSMRKFWGAENNANTGGDSKTRLIRVNEQLTNKLFGPSSQALDVEPVELLHAAILFSFVNTFPQRPAPCIFGEAHGRETWDSSIDVTRTIGWFTTLWPVVAQVNPSDSLETVVRTVRQARRAMDMHGWKHFTSIYHNTQQTKCSAGTHLMEITFNYAGKFQQVEQDGALFRMEPMAKQNLFDGAAELGRWAMLEINSVILNGMLEFHVTYNRGTDEASVLTPWMDNLVKCLEDLASGFA.

Residues 239-633 are adenylation 1; that stretch reads RNATVHGDTL…VRRKDNQVKI (395 aa). The Carrier 1 domain maps to 770–846; it reads AAQGKGEEAI…ELASAANLSN (77 aa). Ser-807 is subject to O-(pantetheine 4'-phosphoryl)serine. A condensation 1 region spans residues 883-1292; that stretch reads EDIYPSTALQ…VGDLPRMSRQ (410 aa). An adenylation 2 region spans residues 1321–1709; that stretch reads LEYPNACAVS…GRKDSQIKIR (389 aa). Positions 1842–1918 constitute a Carrier 2 domain; the sequence is APSNSVEQDL…AIANKIGVVS (77 aa). O-(pantetheine 4'-phosphoryl)serine is present on Ser-1879. Residues 1936–2356 form a condensation 2 region; the sequence is LTPIQEFFFE…LVKCLEDLAS (421 aa).

The protein belongs to the NRP synthetase family.

It carries out the reaction anthranilate + L-tryptophan + 2 ATP = (R)-benzodiazepinedione + 2 AMP + 2 diphosphate + H(+). It functions in the pathway alkaloid biosynthesis. Functionally, nonribosomal peptide synthetase; part of the gene cluster that mediates the biosynthesis of the prenylated pyrroloindoline diketopiperazine acetylaszonalenin. The first step in the pathway is the formation of (R)-benzodiazepinedione by condensation of tryptophan and anthranilic acid catalyzed by the non-ribosomal peptide synthetase anaPS. The prenyltransferase anaPT then converts (R)-benzodiazepinedione to aszonalenin in the presence of dimethylallyl diphosphate (DMAPP) via C3-prenylation. The last step in the biosynthesis of acetylaszonalenin via acetylation of aszonalenin at position N1 catalyzed by anaAT. The protein is Nonribosomal peptide synthetase anaPS of Neosartorya fischeri (strain ATCC 1020 / DSM 3700 / CBS 544.65 / FGSC A1164 / JCM 1740 / NRRL 181 / WB 181) (Aspergillus fischerianus).